A 303-amino-acid chain; its full sequence is MQADKVKVAILGSGNIGTDLMYKLLRQPGPMELALVAGIDPASEGLARARQLGIPTSASGIEAILADPEIRIVFDATSAKAHVRHARLLREHGRIAIDLTPAARGPYVVPPVNLGMHLDAPNVNLITCGGQATIPLVYAVSRVTPVRYAEMVSTVSSRSAGPGTRQNIDEFTFTTARGLEVIGGAHQAKAIIILNPANPPILMRNTIYVLPEGEFDETAVQNSVAQMVADVQQYVPGYRLKNRPVIERRATPWGERPVLIMLLEVEGAGDFLPRYAGNLDIMTSAARRVGEVFAQHILKEVAA.

Position 13–16 (13–16 (SGNI)) interacts with NAD(+). Residue Cys-128 is the Acyl-thioester intermediate of the active site. Residues 159–167 (SAGPGTRQN) and Asn-278 contribute to the NAD(+) site.

The protein belongs to the acetaldehyde dehydrogenase family.

It carries out the reaction acetaldehyde + NAD(+) + CoA = acetyl-CoA + NADH + H(+). The protein is Acetaldehyde dehydrogenase of Chloroflexus aggregans (strain MD-66 / DSM 9485).